The primary structure comprises 418 residues: AP-3 complex subunit mu-2 (418 aa).

The region spanning 176–417 (NNEAYFDVIE…MTKAGKFQVR (242 aa)) is the MHD domain.

The protein belongs to the adaptor complexes medium subunit family. In terms of assembly, AP-3 associates with the BLOC-1 complex. Adaptor protein complex 3 (AP-3) is a heterotetramer composed of two large adaptins (delta-type subunit AP3D1 and beta-type subunit AP3B1 or AP3B2), a medium adaptin (mu-type subunit AP3M1 or AP3M2) and a small adaptin (sigma-type subunit APS1 or AP3S2).

The protein resides in the golgi apparatus. Its subcellular location is the cytoplasmic vesicle membrane. Part of the AP-3 complex, an adaptor-related complex which is not clathrin-associated. The complex is associated with the Golgi region as well as more peripheral structures. It facilitates the budding of vesicles from the Golgi membrane and may be directly involved in trafficking to lysosomes. In concert with the BLOC-1 complex, AP-3 is required to target cargos into vesicles assembled at cell bodies for delivery into neurites and nerve terminals. The protein is AP-3 complex subunit mu-2 (AP3M2) of Homo sapiens (Human).